Here is a 356-residue protein sequence, read N- to C-terminus: UDP-N-acetylglucosamine--N-acetylmuramyl-(pentapeptide) pyrophosphoryl-undecaprenol N-acetylglucosamine transferase (356 aa).

Residues T14–G16, N126, R162, S190, I244, and Q289 each bind UDP-N-acetyl-alpha-D-glucosamine.

It belongs to the glycosyltransferase 28 family. MurG subfamily.

It localises to the cell inner membrane. The catalysed reaction is di-trans,octa-cis-undecaprenyl diphospho-N-acetyl-alpha-D-muramoyl-L-alanyl-D-glutamyl-meso-2,6-diaminopimeloyl-D-alanyl-D-alanine + UDP-N-acetyl-alpha-D-glucosamine = di-trans,octa-cis-undecaprenyl diphospho-[N-acetyl-alpha-D-glucosaminyl-(1-&gt;4)]-N-acetyl-alpha-D-muramoyl-L-alanyl-D-glutamyl-meso-2,6-diaminopimeloyl-D-alanyl-D-alanine + UDP + H(+). It participates in cell wall biogenesis; peptidoglycan biosynthesis. Functionally, cell wall formation. Catalyzes the transfer of a GlcNAc subunit on undecaprenyl-pyrophosphoryl-MurNAc-pentapeptide (lipid intermediate I) to form undecaprenyl-pyrophosphoryl-MurNAc-(pentapeptide)GlcNAc (lipid intermediate II). The protein is UDP-N-acetylglucosamine--N-acetylmuramyl-(pentapeptide) pyrophosphoryl-undecaprenol N-acetylglucosamine transferase of Cupriavidus necator (strain ATCC 17699 / DSM 428 / KCTC 22496 / NCIMB 10442 / H16 / Stanier 337) (Ralstonia eutropha).